Here is a 227-residue protein sequence, read N- to C-terminus: MAGPKHVLLVSEHWDLFFQTKELLNPEEYRCTIGQQYKQELSADLVVCEYSLLPREIRSPKSLEGSFVLVLLDFFDEETSVDLLDRGFWYLIRPITPRILKSAISLFLSQHSLHSVPESIRFGPNVFYVLKLTVETPEGSVHLTPSESGILKRLLINKGQLCLRKHLLEEIKNHAKAIVARNVDVHIASLRKKLGAYGSRIVTLRGVGYLFSDDGDKKFSQQDTKLS.

The 103-residue stretch at 6 to 108 folds into the Response regulatory domain; it reads HVLLVSEHWD…ILKSAISLFL (103 aa). The segment at residues 117 to 213 is a DNA-binding region (ompR/PhoB-type); it reads PESIRFGPNV…LRGVGYLFSD (97 aa).

In terms of assembly, homodimer.

Functionally, may be a global positive regulator of transcription. Binds a cis-acting element of its own promoter DNA sequence and is hence probably also involved in its own transcription activation. The recognition sequence is 5'-WHGAWNH-N(3-5)-WHGAWNH-3', where W is A/T, H is C/A/T, N is G/C/A/T and the linker length in the middle is 3 to 5 nucleotides. The sequence is that of Atypical response regulator protein ChxR from Chlamydia trachomatis serovar L2 (strain ATCC VR-902B / DSM 19102 / 434/Bu).